A 302-amino-acid chain; its full sequence is Oxaloacetate decarboxylase 2 (302 aa).

Residue Ser-50 coordinates substrate. Asp-88 is a binding site for Mg(2+). Substrate is bound by residues Arg-159 and His-235.

Belongs to the isocitrate lyase/PEP mutase superfamily. Oxaloacetate decarboxylase family. Homotetramer; dimer of dimers. Mg(2+) serves as cofactor.

The catalysed reaction is oxaloacetate + H(+) = pyruvate + CO2. In terms of biological role, catalyzes the decarboxylation of oxaloacetate into pyruvate. Seems to play a role in maintaining cellular concentrations of bicarbonate and pyruvate. The chain is Oxaloacetate decarboxylase 2 from Pseudomonas putida (strain W619).